The primary structure comprises 372 residues: Queuine tRNA-ribosyltransferase (372 aa).

D92 serves as the catalytic Proton acceptor. Residues 92 to 96 (DSGGY), D146, Q188, and G215 contribute to the substrate site. The segment at 246-252 (GIGTIRE) is RNA binding. D265 functions as the Nucleophile in the catalytic mechanism. The interval 270 to 274 (TRLGR) is RNA binding; important for wobble base 34 recognition. 4 residues coordinate Zn(2+): C303, C305, C308, and H334.

Belongs to the queuine tRNA-ribosyltransferase family. In terms of assembly, homodimer. Within each dimer, one monomer is responsible for RNA recognition and catalysis, while the other monomer binds to the replacement base PreQ1. Zn(2+) is required as a cofactor.

It carries out the reaction 7-aminomethyl-7-carbaguanine + guanosine(34) in tRNA = 7-aminomethyl-7-carbaguanosine(34) in tRNA + guanine. It participates in tRNA modification; tRNA-queuosine biosynthesis. Functionally, catalyzes the base-exchange of a guanine (G) residue with the queuine precursor 7-aminomethyl-7-deazaguanine (PreQ1) at position 34 (anticodon wobble position) in tRNAs with GU(N) anticodons (tRNA-Asp, -Asn, -His and -Tyr). Catalysis occurs through a double-displacement mechanism. The nucleophile active site attacks the C1' of nucleotide 34 to detach the guanine base from the RNA, forming a covalent enzyme-RNA intermediate. The proton acceptor active site deprotonates the incoming PreQ1, allowing a nucleophilic attack on the C1' of the ribose to form the product. After dissociation, two additional enzymatic reactions on the tRNA convert PreQ1 to queuine (Q), resulting in the hypermodified nucleoside queuosine (7-(((4,5-cis-dihydroxy-2-cyclopenten-1-yl)amino)methyl)-7-deazaguanosine). This Prochlorococcus marinus (strain SARG / CCMP1375 / SS120) protein is Queuine tRNA-ribosyltransferase.